Consider the following 329-residue polypeptide: Cytosolic Fe-S cluster assembly factor NBP35 (329 aa).

Positions 1–33 (MAPSQVEDISKTELETPEHCPGPESEQAGKEDA) are disordered. The span at 8–18 (DISKTELETPE) shows a compositional bias: basic and acidic residues. The [4Fe-4S] cluster site is built by Cys-20, Cys-34, Cys-37, and Cys-43. 74–81 (GKGGVGKS) contacts ATP. 2 residues coordinate [4Fe-4S] cluster: Cys-248 and Cys-251.

It belongs to the Mrp/NBP35 ATP-binding proteins family. NUBP1/NBP35 subfamily. As to quaternary structure, heterotetramer of 2 NBP35 and 2 CFD1 chains. [4Fe-4S] cluster is required as a cofactor.

The protein localises to the cytoplasm. It localises to the nucleus. In terms of biological role, component of the cytosolic iron-sulfur (Fe/S) protein assembly (CIA) machinery. Required for maturation of extramitochondrial Fe-S proteins. The NBP35-CFD1 heterotetramer forms a Fe-S scaffold complex, mediating the de novo assembly of an Fe-S cluster and its transfer to target apoproteins. Required for biogenesis and export of both ribosomal subunits, which may reflect a role in assembly of the Fe/S clusters in RLI1, a protein which performs rRNA processing and ribosome export. This is Cytosolic Fe-S cluster assembly factor NBP35 from Debaryomyces hansenii (strain ATCC 36239 / CBS 767 / BCRC 21394 / JCM 1990 / NBRC 0083 / IGC 2968) (Yeast).